The sequence spans 361 residues: Phosphoserine aminotransferase (361 aa).

The L-glutamate site is built by Ser-9 and Arg-42. Residues 76-77 (AR), Trp-102, Thr-153, Asp-173, and Gln-196 each bind pyridoxal 5'-phosphate. Lys-197 is subject to N6-(pyridoxal phosphate)lysine. Residue 238–239 (NT) coordinates pyridoxal 5'-phosphate.

The protein belongs to the class-V pyridoxal-phosphate-dependent aminotransferase family. SerC subfamily. Homodimer. It depends on pyridoxal 5'-phosphate as a cofactor.

The protein localises to the cytoplasm. The catalysed reaction is O-phospho-L-serine + 2-oxoglutarate = 3-phosphooxypyruvate + L-glutamate. It carries out the reaction 4-(phosphooxy)-L-threonine + 2-oxoglutarate = (R)-3-hydroxy-2-oxo-4-phosphooxybutanoate + L-glutamate. It participates in amino-acid biosynthesis; L-serine biosynthesis; L-serine from 3-phospho-D-glycerate: step 2/3. It functions in the pathway cofactor biosynthesis; pyridoxine 5'-phosphate biosynthesis; pyridoxine 5'-phosphate from D-erythrose 4-phosphate: step 3/5. Catalyzes the reversible conversion of 3-phosphohydroxypyruvate to phosphoserine and of 3-hydroxy-2-oxo-4-phosphonooxybutanoate to phosphohydroxythreonine. The chain is Phosphoserine aminotransferase from Sodalis glossinidius (strain morsitans).